A 299-amino-acid polypeptide reads, in one-letter code: Sulfate adenylyltransferase subunit 2 (299 aa).

This sequence belongs to the PAPS reductase family. CysD subfamily. As to quaternary structure, heterodimer composed of CysD, the smaller subunit, and CysN.

The catalysed reaction is sulfate + ATP + H(+) = adenosine 5'-phosphosulfate + diphosphate. It participates in sulfur metabolism; hydrogen sulfide biosynthesis; sulfite from sulfate: step 1/3. With CysN forms the ATP sulfurylase (ATPS) that catalyzes the adenylation of sulfate producing adenosine 5'-phosphosulfate (APS) and diphosphate, the first enzymatic step in sulfur assimilation pathway. APS synthesis involves the formation of a high-energy phosphoric-sulfuric acid anhydride bond driven by GTP hydrolysis by CysN coupled to ATP hydrolysis by CysD. The protein is Sulfate adenylyltransferase subunit 2 of Colwellia psychrerythraea (strain 34H / ATCC BAA-681) (Vibrio psychroerythus).